Consider the following 293-residue polypeptide: Small ribosomal subunit biogenesis GTPase RsgA (293 aa).

A CP-type G domain is found at 63-223 (QNELVRPPIA…VADTPGFSAL (161 aa)). GTP contacts are provided by residues 112 to 115 (SKID) and 166 to 174 (GQSGVGKSS). Cys-247, Cys-252, His-254, and Cys-260 together coordinate Zn(2+).

The protein belongs to the TRAFAC class YlqF/YawG GTPase family. RsgA subfamily. In terms of assembly, monomer. Associates with 30S ribosomal subunit, binds 16S rRNA. Requires Zn(2+) as cofactor.

Its subcellular location is the cytoplasm. One of several proteins that assist in the late maturation steps of the functional core of the 30S ribosomal subunit. Helps release RbfA from mature subunits. May play a role in the assembly of ribosomal proteins into the subunit. Circularly permuted GTPase that catalyzes slow GTP hydrolysis, GTPase activity is stimulated by the 30S ribosomal subunit. The sequence is that of Small ribosomal subunit biogenesis GTPase RsgA from Geobacillus kaustophilus (strain HTA426).